A 435-amino-acid polypeptide reads, in one-letter code: GTPase Der (435 aa).

EngA-type G domains are found at residues 4–167 and 175–350; these read GIVA…PSHE and TRVS…TALD. Residues 10–17, 57–61, 119–122, 181–188, 228–232, and 293–296 contribute to the GTP site; these read GRPNVGKS, DTGGI, NKYD, DTAGI, and NKWD. In terms of domain architecture, KH-like spans 351–435; that stretch reads KKIKTSVFNE…PMSIIFRERK (85 aa).

The protein belongs to the TRAFAC class TrmE-Era-EngA-EngB-Septin-like GTPase superfamily. EngA (Der) GTPase family. As to quaternary structure, associates with the 50S ribosomal subunit.

In terms of biological role, GTPase that plays an essential role in the late steps of ribosome biogenesis. In Mesoplasma florum (strain ATCC 33453 / NBRC 100688 / NCTC 11704 / L1) (Acholeplasma florum), this protein is GTPase Der.